Consider the following 129-residue polypeptide: Small ribosomal subunit protein uS12 (129 aa).

Asp-89 is modified (3-methylthioaspartic acid). Positions 101-129 (TLDTSGVSDRKQSRSKYGAKQPKAVAAKK) are disordered.

This sequence belongs to the universal ribosomal protein uS12 family. As to quaternary structure, part of the 30S ribosomal subunit. Contacts proteins S8 and S17. May interact with IF1 in the 30S initiation complex.

Its function is as follows. With S4 and S5 plays an important role in translational accuracy. Functionally, interacts with and stabilizes bases of the 16S rRNA that are involved in tRNA selection in the A site and with the mRNA backbone. Located at the interface of the 30S and 50S subunits, it traverses the body of the 30S subunit contacting proteins on the other side and probably holding the rRNA structure together. The combined cluster of proteins S8, S12 and S17 appears to hold together the shoulder and platform of the 30S subunit. This Chlorobium luteolum (strain DSM 273 / BCRC 81028 / 2530) (Pelodictyon luteolum) protein is Small ribosomal subunit protein uS12.